Consider the following 453-residue polypeptide: Ribulose bisphosphate carboxylase large chain (453 aa).

Positions methionine 1–serine 2 are excised as a propeptide. N-acetylproline is present on proline 3. Lysine 14 bears the N6,N6,N6-trimethyllysine mark. Residues asparagine 123 and threonine 173 each coordinate substrate. The active-site Proton acceptor is the lysine 175. Lysine 177 contacts substrate. Positions 201, 203, and 204 each coordinate Mg(2+). At lysine 201 the chain carries N6-carboxylysine. The Proton acceptor role is filled by histidine 294. Residues arginine 295, histidine 327, and serine 379 each contribute to the substrate site.

This sequence belongs to the RuBisCO large chain family. Type I subfamily. As to quaternary structure, heterohexadecamer of 8 large chains and 8 small chains; disulfide-linked. The disulfide link is formed within the large subunit homodimers. It depends on Mg(2+) as a cofactor. The disulfide bond which can form in the large chain dimeric partners within the hexadecamer appears to be associated with oxidative stress and protein turnover.

It is found in the plastid. The protein localises to the chloroplast. The enzyme catalyses 2 (2R)-3-phosphoglycerate + 2 H(+) = D-ribulose 1,5-bisphosphate + CO2 + H2O. The catalysed reaction is D-ribulose 1,5-bisphosphate + O2 = 2-phosphoglycolate + (2R)-3-phosphoglycerate + 2 H(+). Functionally, ruBisCO catalyzes two reactions: the carboxylation of D-ribulose 1,5-bisphosphate, the primary event in carbon dioxide fixation, as well as the oxidative fragmentation of the pentose substrate in the photorespiration process. Both reactions occur simultaneously and in competition at the same active site. The polypeptide is Ribulose bisphosphate carboxylase large chain (Galium parisiense (Wall bedstraw)).